The chain runs to 203 residues: Small ribosomal subunit protein uS3 (203 aa).

The region spanning 39 to 113 (IREIIRRNFL…NHVLNAKNIA (75 aa)) is the KH type-2 domain.

Belongs to the universal ribosomal protein uS3 family. In terms of assembly, part of the 30S ribosomal subunit. Forms a tight complex with proteins S10 and S14.

Binds the lower part of the 30S subunit head. Binds mRNA in the 70S ribosome, positioning it for translation. This is Small ribosomal subunit protein uS3 from Carsonella ruddii.